A 502-amino-acid chain; its full sequence is Probable cytosol aminopeptidase (502 aa).

Residues K265 and D270 each contribute to the Mn(2+) site. K277 is an active-site residue. Mn(2+)-binding residues include D288, D347, and E349. R351 is a catalytic residue.

The protein belongs to the peptidase M17 family. Requires Mn(2+) as cofactor.

It is found in the cytoplasm. It carries out the reaction Release of an N-terminal amino acid, Xaa-|-Yaa-, in which Xaa is preferably Leu, but may be other amino acids including Pro although not Arg or Lys, and Yaa may be Pro. Amino acid amides and methyl esters are also readily hydrolyzed, but rates on arylamides are exceedingly low.. It catalyses the reaction Release of an N-terminal amino acid, preferentially leucine, but not glutamic or aspartic acids.. Presumably involved in the processing and regular turnover of intracellular proteins. Catalyzes the removal of unsubstituted N-terminal amino acids from various peptides. This Rickettsia bellii (strain RML369-C) protein is Probable cytosol aminopeptidase.